Reading from the N-terminus, the 493-residue chain is MQQHHLQQQQQQQQQQEQQHLQEQQQHLQQLHHHAHHHLPQPLHTTSHHHSAHPHLQQQQQQQQHAVVASSPSSVLQQQQQQSTPTTHSTPTHAVMYEDPPPVPLVAVQQQHLPAPQQQQQLQQQQQQQQQQLATTPVAGALSPAQTPTGPSAQQQQHLTSPHHQQLPQQQTPNSVASGASSNLQQQQQQQNAAVAPGQTQIVAPTTASVSPSSVSSQKEDINMSIQLAPLHIPAIRAGPGFETDTSAAVKRHTAHWAYNDEGFNQHYGSGYYDRKHMFAYPYPETQFPVGQYWGPNYRPDQTTSAAAAAAYMNEAERHVSAAARQSVEGTSTSSYEPPTYSSPGGLRGYPSENYSSSGASGGLSVGAVGPCTPNPGLHEWTGQVSVRKKRKPYSKFQTLELEKEFLFNAYVSKQKRWELARNLQLTERQVKIWFQNRRMKNKKNSQRQANQQNNNNNSSSNHNHAQATQQHHSGHHLNLSLNMGHHAAKMHQ.

Residues 1–29 (MQQHHLQQQQQQQQQQEQQHLQEQQQHLQ) are compositionally biased toward low complexity. Disordered regions lie at residues 1–199 (MQQH…APGQ), 322–360 (AAAR…SSGA), and 438–475 (RRMK…HHSG). Over residues 30-39 (QLHHHAHHHL) the composition is skewed to basic residues. Low complexity-rich tracts occupy residues 54–95 (PHLQ…THAV) and 105–134 (LVAV…QQLA). The span at 144–153 (PAQTPTGPSA) shows a compositional bias: polar residues. A compositionally biased stretch (low complexity) spans 154 to 173 (QQQQHLTSPHHQQLPQQQTP). Residues 174–184 (NSVASGASSNL) show a composition bias toward polar residues. The span at 329–345 (EGTSTSSYEPPTYSSPG) shows a compositional bias: low complexity. Positions 387-446 (VRKKRKPYSKFQTLELEKEFLFNAYVSKQKRWELARNLQLTERQVKIWFQNRRMKNKKNS) form a DNA-binding region, homeobox. Residues 447–475 (QRQANQQNNNNNSSSNHNHAQATQQHHSG) show a composition bias toward low complexity.

Belongs to the Abd-B homeobox family. In terms of tissue distribution, isoform M and isoform R are expressed in ectodermal and mesodermal tissues and central nervous system of fourth to ninth embryonic abdominal segments. Later in embryogenesis, expression is seen in visceral mesoderm surrounding hindgut and in two Malpighian tubules.

The protein localises to the nucleus. In terms of biological role, sequence-specific transcription factor which is part of a developmental regulatory system that provides cells with specific positional identities on the anterior-posterior axis. The sequence is that of Homeobox protein abdominal-B (Abd-B) from Drosophila melanogaster (Fruit fly).